A 598-amino-acid polypeptide reads, in one-letter code: Elongation factor 4 (598 aa).

A tr-type G domain is found at 4 to 186 (SHIRNFSIIA…VIVNKIPPPE (183 aa)). Residues 16–21 (DHGKST) and 133–136 (NKID) each bind GTP.

Belongs to the TRAFAC class translation factor GTPase superfamily. Classic translation factor GTPase family. LepA subfamily.

The protein resides in the cell inner membrane. The enzyme catalyses GTP + H2O = GDP + phosphate + H(+). Its function is as follows. Required for accurate and efficient protein synthesis under certain stress conditions. May act as a fidelity factor of the translation reaction, by catalyzing a one-codon backward translocation of tRNAs on improperly translocated ribosomes. Back-translocation proceeds from a post-translocation (POST) complex to a pre-translocation (PRE) complex, thus giving elongation factor G a second chance to translocate the tRNAs correctly. Binds to ribosomes in a GTP-dependent manner. The sequence is that of Elongation factor 4 from Alteromonas mediterranea (strain DSM 17117 / CIP 110805 / LMG 28347 / Deep ecotype).